Reading from the N-terminus, the 259-residue chain is Proteasome subunit alpha (259 aa).

Belongs to the peptidase T1A family. The 20S proteasome core is composed of 14 alpha and 14 beta subunits that assemble into four stacked heptameric rings, resulting in a barrel-shaped structure. The two inner rings, each composed of seven catalytic beta subunits, are sandwiched by two outer rings, each composed of seven alpha subunits. The catalytic chamber with the active sites is on the inside of the barrel. Has a gated structure, the ends of the cylinder being occluded by the N-termini of the alpha-subunits. Is capped at one or both ends by the proteasome regulatory ATPase, PAN.

It localises to the cytoplasm. The formation of the proteasomal ATPase PAN-20S proteasome complex, via the docking of the C-termini of PAN into the intersubunit pockets in the alpha-rings, triggers opening of the gate for substrate entry. Interconversion between the open-gate and close-gate conformations leads to a dynamic regulation of the 20S proteasome proteolysis activity. Component of the proteasome core, a large protease complex with broad specificity involved in protein degradation. In Methanococcus maripaludis (strain C5 / ATCC BAA-1333), this protein is Proteasome subunit alpha.